Consider the following 71-residue polypeptide: Large ribosomal subunit protein bL31 (71 aa).

Zn(2+)-binding residues include Cys-16, Cys-18, Cys-38, and Cys-41.

Belongs to the bacterial ribosomal protein bL31 family. Type A subfamily. In terms of assembly, part of the 50S ribosomal subunit. Zn(2+) serves as cofactor.

Its function is as follows. Binds the 23S rRNA. This chain is Large ribosomal subunit protein bL31, found in Francisella tularensis subsp. mediasiatica (strain FSC147).